We begin with the raw amino-acid sequence, 207 residues long: Large ribosomal subunit protein uL4 (207 aa).

A disordered region spans residues 44–81 (KRQGTQSAKTRSEVRGGGRKPWRQKGTGRARQGSIRSP). Over residues 60 to 71 (GGRKPWRQKGTG) the composition is skewed to basic residues.

The protein belongs to the universal ribosomal protein uL4 family. Part of the 50S ribosomal subunit.

Functionally, one of the primary rRNA binding proteins, this protein initially binds near the 5'-end of the 23S rRNA. It is important during the early stages of 50S assembly. It makes multiple contacts with different domains of the 23S rRNA in the assembled 50S subunit and ribosome. Forms part of the polypeptide exit tunnel. This Finegoldia magna (strain ATCC 29328 / DSM 20472 / WAL 2508) (Peptostreptococcus magnus) protein is Large ribosomal subunit protein uL4.